Reading from the N-terminus, the 280-residue chain is Polyamine aminopropyltransferase (280 aa).

One can recognise a PABS domain in the interval 3–237 (DVYFMERDPY…YWWSFSVGSK (235 aa)). Glutamine 33 is an S-methyl-5'-thioadenosine binding site. 2 residues coordinate spermidine: histidine 64 and aspartate 88. S-methyl-5'-thioadenosine is bound by residues aspartate 108 and 139–140 (DG). The active-site Proton acceptor is aspartate 157. Position 157-160 (157-160 (DSTD)) interacts with spermidine.

The protein belongs to the spermidine/spermine synthase family. As to quaternary structure, homodimer or homotetramer.

The protein resides in the cytoplasm. It catalyses the reaction S-adenosyl 3-(methylsulfanyl)propylamine + putrescine = S-methyl-5'-thioadenosine + spermidine + H(+). It functions in the pathway amine and polyamine biosynthesis; spermidine biosynthesis; spermidine from putrescine: step 1/1. Catalyzes the irreversible transfer of a propylamine group from the amino donor S-adenosylmethioninamine (decarboxy-AdoMet) to putrescine (1,4-diaminobutane) to yield spermidine. This chain is Polyamine aminopropyltransferase, found in Hydrogenobaculum sp. (strain Y04AAS1).